The sequence spans 277 residues: Protein HEAT-INDUCED TAS1 TARGET 1 (277 aa).

Belongs to the heat induced plant HTT protein family. Interacts with the heat shock proteins HSP70-14 and At2g33735/HSP40, and with NFYC2 in both cytoplasm and nucleus. As to expression, expressed ubiquitously, including in seedlings, leaves, stems, inflorescences and siliques.

It is found in the cytoplasm. The protein localises to the nucleus. Functionally, mediates both basal and acquired thermotolerance via HSFA1s-directed pathways (e.g. HSFA1A, HSFA1B, and HSFA1D). Triggers the expression of HSFA1A and HSFA1B. In Arabidopsis thaliana (Mouse-ear cress), this protein is Protein HEAT-INDUCED TAS1 TARGET 1.